Consider the following 107-residue polypeptide: Small ribosomal subunit protein bS6 (107 aa).

The protein belongs to the bacterial ribosomal protein bS6 family.

In terms of biological role, binds together with bS18 to 16S ribosomal RNA. This chain is Small ribosomal subunit protein bS6, found in Synechococcus elongatus (strain ATCC 33912 / PCC 7942 / FACHB-805) (Anacystis nidulans R2).